The following is a 345-amino-acid chain: CRISPR-associated endonuclease Cas1 1 (345 aa).

Positions 168, 239, and 254 each coordinate a divalent metal cation.

This sequence belongs to the CRISPR-associated endonuclease Cas1 family. In terms of assembly, forms a heterotetramer with a Cas2 homodimer. Homodimer. The cofactor is a divalent metal cation.

In terms of biological role, CRISPR (clustered regularly interspaced short palindromic repeat), is an adaptive immune system that provides protection against mobile genetic elements (viruses, transposable elements and conjugative plasmids). CRISPR clusters contain sequences complementary to antecedent mobile elements and target invading nucleic acids. CRISPR clusters are transcribed and processed into CRISPR RNA (crRNA). Involved in the integration of spacer DNA into the CRISPR cassette. Acts as a dsDNA and ssRNA nuclease, binds to linear and circular dsDNA and linear ssRNA and ssDNA. This is CRISPR-associated endonuclease Cas1 1 from Archaeoglobus fulgidus (strain ATCC 49558 / DSM 4304 / JCM 9628 / NBRC 100126 / VC-16).